Here is a 251-residue protein sequence, read N- to C-terminus: Triosephosphate isomerase (251 aa).

9–11 (NWK) contributes to the substrate binding site. Residue H95 is the Electrophile of the active site. The Proton acceptor role is filled by E167. Residues G173, S213, and 234 to 235 (GG) each bind substrate.

Belongs to the triosephosphate isomerase family. In terms of assembly, homodimer.

The protein localises to the cytoplasm. The catalysed reaction is D-glyceraldehyde 3-phosphate = dihydroxyacetone phosphate. It functions in the pathway carbohydrate biosynthesis; gluconeogenesis. Its pathway is carbohydrate degradation; glycolysis; D-glyceraldehyde 3-phosphate from glycerone phosphate: step 1/1. Functionally, involved in the gluconeogenesis. Catalyzes stereospecifically the conversion of dihydroxyacetone phosphate (DHAP) to D-glyceraldehyde-3-phosphate (G3P). The sequence is that of Triosephosphate isomerase from Lacticaseibacillus casei (strain BL23) (Lactobacillus casei).